Reading from the N-terminus, the 303-residue chain is Ferrochelatase (303 aa).

The Fe cation site is built by H185 and E262.

It belongs to the ferrochelatase family.

Its subcellular location is the cytoplasm. It carries out the reaction heme b + 2 H(+) = protoporphyrin IX + Fe(2+). The protein operates within porphyrin-containing compound metabolism; protoheme biosynthesis; protoheme from protoporphyrin-IX: step 1/1. Catalyzes the ferrous insertion into protoporphyrin IX. This is Ferrochelatase from Campylobacter jejuni subsp. doylei (strain ATCC BAA-1458 / RM4099 / 269.97).